The sequence spans 300 residues: D-alanine--D-alanine ligase (300 aa).

One can recognise an ATP-grasp domain in the interval 99-293; that stretch reads KKILKYANIN…FAELLNSIVK (195 aa). Residue 126 to 181 coordinates ATP; it reads IEKIGYPVFVKPNSGGSSVATNLVKNKEGIKEAVELALKYDKEVMIENYTKGEEIT. Positions 248, 260, and 262 each coordinate Mg(2+).

It belongs to the D-alanine--D-alanine ligase family. The cofactor is Mg(2+). Requires Mn(2+) as cofactor.

It is found in the cytoplasm. It carries out the reaction 2 D-alanine + ATP = D-alanyl-D-alanine + ADP + phosphate + H(+). It functions in the pathway cell wall biogenesis; peptidoglycan biosynthesis. Functionally, cell wall formation. In Clostridium botulinum (strain Loch Maree / Type A3), this protein is D-alanine--D-alanine ligase.